The chain runs to 213 residues: High frequency lysogenization protein HflD (213 aa).

A coiled-coil region spans residues 79–126 (QGLNAELTRYTLSLMVLERKLSSAKGALDTLGNRINGLQRQLEHFDLQ).

It belongs to the HflD family. As to quaternary structure, interacts with CII protein from phage lambda.

The protein resides in the cytoplasm. It localises to the cell inner membrane. Negative regulator of phage lambda lysogenization. Contributes to the degradation of the phage regulatory protein CII. Acts probably by holding CII on the membrane surface, away from the target promoters, but close to the FtsH protease. In Escherichia coli O127:H6 (strain E2348/69 / EPEC), this protein is High frequency lysogenization protein HflD.